Consider the following 279-residue polypeptide: Eukaryotic translation initiation factor 3 subunit G (279 aa).

2 disordered regions span residues 69–90 and 149–193; these read AKYGKEKHSSPGPDTSTTQLGE and LNGG…EARD. Phosphoserine is present on S77. Residues 196 to 275 enclose the RRM domain; that stretch reads TTLKVSQLNT…LILHLEWSKK (80 aa).

This sequence belongs to the eIF-3 subunit G family. As to quaternary structure, component of the eukaryotic translation initiation factor 3 (eIF-3) complex.

The protein resides in the cytoplasm. In terms of biological role, RNA-binding component of the eukaryotic translation initiation factor 3 (eIF-3) complex, which is involved in protein synthesis of a specialized repertoire of mRNAs and, together with other initiation factors, stimulates binding of mRNA and methionyl-tRNAi to the 40S ribosome. The eIF-3 complex specifically targets and initiates translation of a subset of mRNAs involved in cell proliferation. This subunit can bind 18S rRNA. The sequence is that of Eukaryotic translation initiation factor 3 subunit G from Lodderomyces elongisporus (strain ATCC 11503 / CBS 2605 / JCM 1781 / NBRC 1676 / NRRL YB-4239) (Yeast).